A 180-amino-acid polypeptide reads, in one-letter code: Large ribosomal subunit protein uL5 (180 aa).

The protein belongs to the universal ribosomal protein uL5 family. Forms a bridge to the 30S subunit in the 70S ribosome. Part of the 50S ribosomal subunit; part of the 5S rRNA/L5/L18/L25 (CTC) subcomplex. Is known to contact the 5S rRNA, 23S rRNA and the P site tRNA.

In terms of biological role, this is one of the proteins that bind and probably mediate the attachment of the 5S RNA into the large ribosomal subunit, where it forms part of the central protuberance. In the 70S ribosome it contacts protein S13 of the 30S subunit (bridge B1b), connecting the 2 subunits; this bridge is implicated in subunit movement. Contacts the P site tRNA; the 5S rRNA and some of its associated proteins might help stabilize positioning of ribosome-bound tRNAs. This Deinococcus radiodurans (strain ATCC 13939 / DSM 20539 / JCM 16871 / CCUG 27074 / LMG 4051 / NBRC 15346 / NCIMB 9279 / VKM B-1422 / R1) protein is Large ribosomal subunit protein uL5 (rplE).